A 316-amino-acid chain; its full sequence is MYVLLANPRGFCAGVDRAIEIVKRAIETLGAPIYVRHEVVHNRFVVDDLKQRGAIFVEELDEVPDDATVIFSAHGVPQAVRQEAERRGLKVFDATCPLVTKVHFEVARHCRAGRDVVLIGHAGHPEVEGTMGQWSRERGPGTIYLVEDIEQVATLDVRQPENLAYTTQTTLSVDDTMGIIEALRARYPAMQGPRHDDICYATQNRQDAVRDLARQCDLVLVVGSPNSSNSNRLSELARRDGVESYLIDNASEIDPAWIVGKQHIGLTAGASAPQVLVDGVLARLRELGASGVSELEGEPESMVFALPKELRLRLVG.

Cys-12 serves as a coordination point for [4Fe-4S] cluster. Residues His-41 and His-74 each contribute to the (2E)-4-hydroxy-3-methylbut-2-enyl diphosphate site. The dimethylallyl diphosphate site is built by His-41 and His-74. 2 residues coordinate isopentenyl diphosphate: His-41 and His-74. Cys-96 is a [4Fe-4S] cluster binding site. Residue His-124 participates in (2E)-4-hydroxy-3-methylbut-2-enyl diphosphate binding. His-124 contributes to the dimethylallyl diphosphate binding site. Isopentenyl diphosphate is bound at residue His-124. The Proton donor role is filled by Glu-126. Thr-169 lines the (2E)-4-hydroxy-3-methylbut-2-enyl diphosphate pocket. Cys-199 lines the [4Fe-4S] cluster pocket. 4 residues coordinate (2E)-4-hydroxy-3-methylbut-2-enyl diphosphate: Ser-227, Ser-228, Asn-229, and Ser-271. Dimethylallyl diphosphate-binding residues include Ser-227, Ser-228, Asn-229, and Ser-271. The isopentenyl diphosphate site is built by Ser-227, Ser-228, Asn-229, and Ser-271.

The protein belongs to the IspH family. [4Fe-4S] cluster serves as cofactor.

The catalysed reaction is isopentenyl diphosphate + 2 oxidized [2Fe-2S]-[ferredoxin] + H2O = (2E)-4-hydroxy-3-methylbut-2-enyl diphosphate + 2 reduced [2Fe-2S]-[ferredoxin] + 2 H(+). It carries out the reaction dimethylallyl diphosphate + 2 oxidized [2Fe-2S]-[ferredoxin] + H2O = (2E)-4-hydroxy-3-methylbut-2-enyl diphosphate + 2 reduced [2Fe-2S]-[ferredoxin] + 2 H(+). The protein operates within isoprenoid biosynthesis; dimethylallyl diphosphate biosynthesis; dimethylallyl diphosphate from (2E)-4-hydroxy-3-methylbutenyl diphosphate: step 1/1. Its pathway is isoprenoid biosynthesis; isopentenyl diphosphate biosynthesis via DXP pathway; isopentenyl diphosphate from 1-deoxy-D-xylulose 5-phosphate: step 6/6. Functionally, catalyzes the conversion of 1-hydroxy-2-methyl-2-(E)-butenyl 4-diphosphate (HMBPP) into a mixture of isopentenyl diphosphate (IPP) and dimethylallyl diphosphate (DMAPP). Acts in the terminal step of the DOXP/MEP pathway for isoprenoid precursor biosynthesis. This Xanthomonas oryzae pv. oryzae (strain MAFF 311018) protein is 4-hydroxy-3-methylbut-2-enyl diphosphate reductase.